The sequence spans 383 residues: MKNKLPPFIEIYRALIATPSISATEEALDQSNADLITLLADWFKDLGFNVEVQPVPGTRNKFNMLASCGQGAGGLLLAGHTDTVPFDDGRWTRDPFTLTEHDGKLYGLGTADMKGFFAFILDALRDVDVTKLAKPLYILATADEETSMAGARYFAETTALRPDCAIIGEPTSLQPVRAHKGHISNAIRIQGQSGHSSDPARGVNAIELMHDAIGHILQLRDNLKERYHYDAFTVPYPTLNLGHIHGGDASNRICACCELHMDIRPLPGMTLNELNGLLNDALAPVSERWPGRLTVDELHPPIPGYECPPNHKLVEVVEKLLGAKTEVVNYCTEAPFIQTLCPTLVLGPGSINQAHQPDEYLETRFIKPTRELITQVIHHFCWH.

Histidine 80 serves as a coordination point for Zn(2+). The active site involves aspartate 82. A Zn(2+)-binding site is contributed by aspartate 112. The active site involves glutamate 144. The Zn(2+) site is built by glutamate 145, glutamate 169, and histidine 355.

The protein belongs to the peptidase M20A family. ArgE subfamily. Homodimer. The cofactor is Zn(2+). Co(2+) serves as cofactor. Glutathione is required as a cofactor.

The protein resides in the cytoplasm. The catalysed reaction is N(2)-acetyl-L-ornithine + H2O = L-ornithine + acetate. It functions in the pathway amino-acid biosynthesis; L-arginine biosynthesis; L-ornithine from N(2)-acetyl-L-ornithine (linear): step 1/1. Functionally, catalyzes the hydrolysis of the amide bond of N(2)-acetylated L-amino acids. Cleaves the acetyl group from N-acetyl-L-ornithine to form L-ornithine, an intermediate in L-arginine biosynthesis pathway, and a branchpoint in the synthesis of polyamines. The chain is Acetylornithine deacetylase from Escherichia coli O127:H6 (strain E2348/69 / EPEC).